The primary structure comprises 290 residues: Protein SSO1 (290 aa).

Topologically, residues 1–265 (MSYNNPYQLE…ARKARKNKIR (265 aa)) are cytoplasmic. The t-SNARE coiled-coil homology domain occupies 190–252 (LAEVQARHQE…EQGVGHTDKA (63 aa)). A helical; Anchor for type IV membrane protein membrane pass occupies residues 266–287 (CWLIVFAIIVVVVVVVVVPAVV). Topologically, residues 288 to 290 (KTR) are extracellular.

It belongs to the syntaxin family.

It localises to the membrane. Its function is as follows. Required for vesicle fusion with the plasma membrane. This chain is Protein SSO1 (SSO1), found in Saccharomyces cerevisiae (strain ATCC 204508 / S288c) (Baker's yeast).